The following is a 318-amino-acid chain: tRNA uridine(34) hydroxylase (318 aa).

The Rhodanese domain maps to 123-217; sequence EDDDTVIIDA…YGKDPETKGQ (95 aa). Residue C177 is the Cysteine persulfide intermediate of the active site.

It belongs to the TrhO family.

The enzyme catalyses uridine(34) in tRNA + AH2 + O2 = 5-hydroxyuridine(34) in tRNA + A + H2O. In terms of biological role, catalyzes oxygen-dependent 5-hydroxyuridine (ho5U) modification at position 34 in tRNAs. This chain is tRNA uridine(34) hydroxylase, found in Staphylococcus aureus (strain Mu3 / ATCC 700698).